The sequence spans 626 residues: Chaperone protein HtpG (626 aa).

Positions 1–341 (METKQFKAES…SEDLSLNISR (341 aa)) are a; substrate-binding. The segment at 342 to 552 (EILQHDRQLK…EGELSIEMEK (211 aa)) is b. Residues 490–509 (DLGIEGEEKENTSNSDDKEN) form a disordered region. Basic and acidic residues predominate over residues 498–509 (KENTSNSDDKEN). The c stretch occupies residues 553–626 (VLNAMPNNQN…FTNNICKIMK (74 aa)).

This sequence belongs to the heat shock protein 90 family. Homodimer.

The protein localises to the cytoplasm. Its function is as follows. Molecular chaperone. Has ATPase activity. The polypeptide is Chaperone protein HtpG (Clostridium botulinum (strain ATCC 19397 / Type A)).